The chain runs to 202 residues: Small ribosomal subunit protein uS4 (202 aa).

Residues 15–42 form a disordered region; that stretch reads LGDLPGLTRKAAKRSYPPGQHGQARRKR. Residues 90–152 enclose the S4 RNA-binding domain; that stretch reads NRLDNVCFRL…KCSKQLAEGN (63 aa).

This sequence belongs to the universal ribosomal protein uS4 family. In terms of assembly, part of the 30S ribosomal subunit. Contacts protein S5. The interaction surface between S4 and S5 is involved in control of translational fidelity.

Functionally, one of the primary rRNA binding proteins, it binds directly to 16S rRNA where it nucleates assembly of the body of the 30S subunit. Its function is as follows. With S5 and S12 plays an important role in translational accuracy. This chain is Small ribosomal subunit protein uS4, found in Synechococcus sp. (strain WH7803).